A 362-amino-acid chain; its full sequence is Peptide chain release factor 1 (362 aa).

Gln-235 bears the N5-methylglutamine mark.

This sequence belongs to the prokaryotic/mitochondrial release factor family. In terms of processing, methylated by PrmC. Methylation increases the termination efficiency of RF1.

Its subcellular location is the cytoplasm. Functionally, peptide chain release factor 1 directs the termination of translation in response to the peptide chain termination codons UAG and UAA. The protein is Peptide chain release factor 1 of Variovorax paradoxus (strain S110).